Consider the following 139-residue polypeptide: Large ribosomal subunit protein uL16 (139 aa).

Residues 1–23 (MLQPARTKYRKMHKGRMPGSAHR) form a disordered region. The span at 7–16 (TKYRKMHKGR) shows a compositional bias: basic residues.

This sequence belongs to the universal ribosomal protein uL16 family. As to quaternary structure, part of the 50S ribosomal subunit.

In terms of biological role, binds 23S rRNA and is also seen to make contacts with the A and possibly P site tRNAs. In Myxococcus xanthus (strain DK1622), this protein is Large ribosomal subunit protein uL16.